Consider the following 601-residue polypeptide: Amino-acid acetyltransferase, mitochondrial (601 aa).

An N-acetyltransferase domain is found at 401-558 (FTMDNLIASK…KKKQNNKKKK (158 aa)).

Belongs to the acetyltransferase family.

The protein resides in the mitochondrion. The catalysed reaction is L-glutamate + acetyl-CoA = N-acetyl-L-glutamate + CoA + H(+). Its pathway is amino-acid biosynthesis; L-arginine biosynthesis; N(2)-acetyl-L-ornithine from L-glutamate: step 1/4. In terms of biological role, N-acetylglutamate synthase involved in arginine biosynthesis. The polypeptide is Amino-acid acetyltransferase, mitochondrial (ARG2) (Lodderomyces elongisporus (strain ATCC 11503 / CBS 2605 / JCM 1781 / NBRC 1676 / NRRL YB-4239) (Yeast)).